The sequence spans 542 residues: Thermosome subunit alpha (542 aa).

This sequence belongs to the TCP-1 chaperonin family. In terms of assembly, forms a Heterooligomeric complex of two stacked eight-membered rings.

In terms of biological role, molecular chaperone; binds unfolded polypeptides in vitro, and has a weak ATPase activity. This is Thermosome subunit alpha (thsA) from Methanothermobacter thermautotrophicus (strain ATCC 29096 / DSM 1053 / JCM 10044 / NBRC 100330 / Delta H) (Methanobacterium thermoautotrophicum).